The chain runs to 449 residues: UDP-N-acetylmuramoylalanine--D-glutamate ligase (449 aa).

Position 118–124 (118–124 (GTNGKTT)) interacts with ATP.

This sequence belongs to the MurCDEF family.

It is found in the cytoplasm. The enzyme catalyses UDP-N-acetyl-alpha-D-muramoyl-L-alanine + D-glutamate + ATP = UDP-N-acetyl-alpha-D-muramoyl-L-alanyl-D-glutamate + ADP + phosphate + H(+). It participates in cell wall biogenesis; peptidoglycan biosynthesis. Cell wall formation. Catalyzes the addition of glutamate to the nucleotide precursor UDP-N-acetylmuramoyl-L-alanine (UMA). This chain is UDP-N-acetylmuramoylalanine--D-glutamate ligase, found in Staphylococcus epidermidis (strain ATCC 12228 / FDA PCI 1200).